A 102-amino-acid chain; its full sequence is uncharacterized protein (102 aa).

The helical transmembrane segment at 27-47 (TISLVSAGLLEEIFLLFGLTF) threads the bilayer.

It is found in the membrane. This is an uncharacterized protein from Saccharomyces cerevisiae (strain ATCC 204508 / S288c) (Baker's yeast).